The following is a 235-amino-acid chain: MNKLLECRDIRKVYREGSLDTEVLKGVSFDIDKGELVSIVGSSGSGKSTLLHILGALDDATQGEVDFLGQNLSALSSNKQAALRNKHLGFVYQFHHLLADFTALENVAMPLLIGGIKVTEAKQAAKALLEKVGLSHRMDHRPSELSGGERQRVAIARALVNKPDLVLADEPTGNLDHNTALAIYDLMRELNKESNIAFLVVTHDNELAAKMDRQMHMQDGLLVDRLMTESASVEG.

Positions 5-235 (LECRDIRKVY…LMTESASVEG (231 aa)) constitute an ABC transporter domain. 41 to 48 (GSSGSGKS) provides a ligand contact to ATP.

The protein belongs to the ABC transporter superfamily. Lipoprotein translocase (TC 3.A.1.125) family. In terms of assembly, the complex is composed of two ATP-binding proteins (LolD) and two transmembrane proteins (LolC and LolE).

The protein resides in the cell inner membrane. Part of the ABC transporter complex LolCDE involved in the translocation of mature outer membrane-directed lipoproteins, from the inner membrane to the periplasmic chaperone, LolA. Responsible for the formation of the LolA-lipoprotein complex in an ATP-dependent manner. This is Lipoprotein-releasing system ATP-binding protein LolD from Vibrio parahaemolyticus serotype O3:K6 (strain RIMD 2210633).